Consider the following 136-residue polypeptide: Crossover junction endodeoxyribonuclease Hjc (136 aa).

Glutamate 9 lines the Mg(2+) pocket. Serine 29 is a catalytic residue. Residues aspartate 38 and glutamate 51 each coordinate Mg(2+).

This sequence belongs to the Holliday junction resolvase Hjc family. In terms of assembly, homodimer. Requires Mg(2+) as cofactor.

It carries out the reaction Endonucleolytic cleavage at a junction such as a reciprocal single-stranded crossover between two homologous DNA duplexes (Holliday junction).. A structure-specific endonuclease that resolves Holliday junction (HJ) intermediates during genetic recombination. Cleaves 4-way DNA junctions introducing paired nicks in opposing strands, leaving a 5'-terminal phosphate and a 3'-terminal hydroxyl group that are subsequently ligated to produce recombinant products. In Archaeoglobus fulgidus (strain ATCC 49558 / DSM 4304 / JCM 9628 / NBRC 100126 / VC-16), this protein is Crossover junction endodeoxyribonuclease Hjc.